The chain runs to 124 residues: Small ribosomal subunit protein uS12 (124 aa).

Residues 1 to 25 form a disordered region; sequence MPTINQLIRKPRKSQKEKTASPALQ. Residue D89 is modified to 3-methylthioaspartic acid.

It belongs to the universal ribosomal protein uS12 family. Part of the 30S ribosomal subunit. Contacts proteins S8 and S17. May interact with IF1 in the 30S initiation complex.

In terms of biological role, with S4 and S5 plays an important role in translational accuracy. Interacts with and stabilizes bases of the 16S rRNA that are involved in tRNA selection in the A site and with the mRNA backbone. Located at the interface of the 30S and 50S subunits, it traverses the body of the 30S subunit contacting proteins on the other side and probably holding the rRNA structure together. The combined cluster of proteins S8, S12 and S17 appears to hold together the shoulder and platform of the 30S subunit. This Borrelia turicatae (strain 91E135) protein is Small ribosomal subunit protein uS12.